A 240-amino-acid polypeptide reads, in one-letter code: Uridylate kinase (240 aa).

Residue 13–16 (KASG) participates in ATP binding. Glycine 55 lines the UMP pocket. Glycine 56 and arginine 60 together coordinate ATP. Residues aspartate 75 and 136-143 (TGNPFFTT) each bind UMP. Residues threonine 163, glutamine 164, tyrosine 169, and aspartate 172 each contribute to the ATP site.

This sequence belongs to the UMP kinase family. As to quaternary structure, homohexamer.

It localises to the cytoplasm. It carries out the reaction UMP + ATP = UDP + ADP. It functions in the pathway pyrimidine metabolism; CTP biosynthesis via de novo pathway; UDP from UMP (UMPK route): step 1/1. Its activity is regulated as follows. Inhibited by UTP. In terms of biological role, catalyzes the reversible phosphorylation of UMP to UDP. The sequence is that of Uridylate kinase from Mesorhizobium japonicum (strain LMG 29417 / CECT 9101 / MAFF 303099) (Mesorhizobium loti (strain MAFF 303099)).